The primary structure comprises 116 residues: Immunoglobulin heavy variable 2-4 (116 aa).

The signal sequence occupies residues 1–19; the sequence is MAVLVLLFCLVTFPSCVLS. Residues 20 to 116 form the Ig-like domain; it reads QVQLKQSGPG…DDTAIYYCAK (97 aa). A disulfide bond links Cys-41 and Cys-114.

This Mus musculus (Mouse) protein is Immunoglobulin heavy variable 2-4.